A 73-amino-acid polypeptide reads, in one-letter code: Putative membrane protein insertion efficiency factor (73 aa).

The protein belongs to the UPF0161 family.

It localises to the cell inner membrane. Functionally, could be involved in insertion of integral membrane proteins into the membrane. The sequence is that of Putative membrane protein insertion efficiency factor from Parabacteroides distasonis (strain ATCC 8503 / DSM 20701 / CIP 104284 / JCM 5825 / NCTC 11152).